Reading from the N-terminus, the 319-residue chain is Putative peptide permease protein BOV_A0351 (319 aa).

The next 6 membrane-spanning stretches (helical) occupy residues 9–29, 102–122, 138–158, 182–202, 242–262, and 284–304; these read LLIG…LLQL, LLLM…TGII, LALL…LYVF, LLRH…ALIM, LPVV…AIFI, and YPVI…VNIL. Positions 98–305 constitute an ABC transmembrane type-1 domain; sequence IGPTLLLMAA…ACVIIVNILT (208 aa).

Belongs to the binding-protein-dependent transport system permease family. As to quaternary structure, the complex is composed of two ATP-binding proteins (BOV_A0347 and BOV_A0348), two transmembrane proteins (BOV_A0350 and BOV_A0351) and a solute-binding protein (BOV_A0352).

The protein localises to the cell inner membrane. Functionally, probably part of an ABC transporter complex that could be involved in peptide import. Probably responsible for the translocation of the substrate across the membrane. The protein is Putative peptide permease protein BOV_A0351 of Brucella ovis (strain ATCC 25840 / 63/290 / NCTC 10512).